Consider the following 833-residue polypeptide: cGMP-specific 3',5'-cyclic phosphodiesterase (833 aa).

Ser60 carries the post-translational modification Phosphoserine. A disordered region spans residues Phe82 to Ser101. GAF domains are found at residues Asp122–Leu272 and Ser304–Ile461. Residues Glu494 to Gln818 form the PDEase domain. The active-site Proton donor is His571. Residues His575, His611, Asp612, and Asp722 each coordinate Zn(2+). Mg(2+) is bound at residue Asp612. Gln775 serves as a coordination point for 3',5'-cyclic GMP.

This sequence belongs to the cyclic nucleotide phosphodiesterase family. Zn(2+) serves as cofactor. It depends on Mg(2+) as a cofactor. Post-translationally, phosphorylation is regulated by binding of cGMP to the two allosteric sites. Phosphorylation by PRKG1 leads to its activation.

It catalyses the reaction 3',5'-cyclic GMP + H2O = GMP + H(+). The protein operates within purine metabolism; 3',5'-cyclic GMP degradation; GMP from 3',5'-cyclic GMP: step 1/1. In terms of biological role, plays a role in signal transduction by regulating the intracellular concentration of cyclic nucleotides. This phosphodiesterase catalyzes the specific hydrolysis of cGMP to 5'-GMP. Specifically regulates nitric-oxide-generated cGMP. The protein is cGMP-specific 3',5'-cyclic phosphodiesterase (Pde5a) of Rattus norvegicus (Rat).